We begin with the raw amino-acid sequence, 183 residues long: TATA-box-binding protein (183 aa).

2 tandem repeats follow at residues 7–83 (IENV…ARTL) and 99–177 (VQNI…RQQL).

Belongs to the TBP family.

General factor that plays a role in the activation of archaeal genes transcribed by RNA polymerase. Binds specifically to the TATA box promoter element which lies close to the position of transcription initiation. This chain is TATA-box-binding protein, found in Methanothrix thermoacetophila (strain DSM 6194 / JCM 14653 / NBRC 101360 / PT) (Methanosaeta thermophila).